Reading from the N-terminus, the 469-residue chain is MNQSQSGLKKELKTRHMTMISIAGVIGAGLFVGSGSVIHSTGPGAVVSYALAGLLVIFIMRMLGEMSAVNPTSGSFSQYAHDAIGPWAGFTIGWLYWFFWVIVIAIEAIAGAGIIQYWFHDIPLWLTSLILTIVLTLTNVYSVKSFGEFEYWFSLIKVVTIIAFLIVGFAFIFGFAPGSEPVGFSNLTGKGGFFPEGISSVLLGIVVVIFSFMGTEIVAIAAGETSNPIESVTKATRSVVWRIIVFYVGSIAIVVALLPWNSANILESPFVAVLEHIGVPAAAQIMNFIVLTAVLSCLNSGLYTTSRMLYSLAERNEAPRRFMKLSKKGVPVQAIVAGTFFSYIAVVMNYFSPDTVFLFLVNSSGAIALLVYLVIAVSQLKMRKKLEKTNPEALKIKMWLFPFLTYLTIIAICGILVSMAFIDSMRDELLLTGVITGIVLISYLVFRKRKVSEKAAANPVTQQQPDILP.

At 1-17 (MNQSQSGLKKELKTRHM) the chain is on the cytoplasmic side. The chain crosses the membrane as a helical span at residues 18–38 (TMISIAGVIGAGLFVGSGSVI). Position 39 (H39) is a topological domain, extracellular. Residues 40 to 60 (STGPGAVVSYALAGLLVIFIM) form a helical membrane-spanning segment. Over 61–94 (RMLGEMSAVNPTSGSFSQYAHDAIGPWAGFTIGW) the chain is Cytoplasmic. Residues 95-115 (LYWFFWVIVIAIEAIAGAGII) traverse the membrane as a helical segment. A topological domain (extracellular) is located at residue Q116. Residues 117–137 (YWFHDIPLWLTSLILTIVLTL) form a helical membrane-spanning segment. At 138-157 (TNVYSVKSFGEFEYWFSLIK) the chain is on the cytoplasmic side. The chain crosses the membrane as a helical span at residues 158–178 (VVTIIAFLIVGFAFIFGFAPG). Topologically, residues 179-200 (SEPVGFSNLTGKGGFFPEGISS) are extracellular. Residues 201 to 221 (VLLGIVVVIFSFMGTEIVAIA) traverse the membrane as a helical segment. Residues 222–242 (AGETSNPIESVTKATRSVVWR) lie on the Cytoplasmic side of the membrane. The helical transmembrane segment at 243–263 (IIVFYVGSIAIVVALLPWNSA) threads the bilayer. Residues 264 to 269 (NILESP) are Extracellular-facing. Residues 270–290 (FVAVLEHIGVPAAAQIMNFIV) form a helical membrane-spanning segment. The Cytoplasmic portion of the chain corresponds to 291 to 328 (LTAVLSCLNSGLYTTSRMLYSLAERNEAPRRFMKLSKK). The helical transmembrane segment at 329 to 349 (GVPVQAIVAGTFFSYIAVVMN) threads the bilayer. The Extracellular segment spans residues 350–355 (YFSPDT). Residues 356 to 376 (VFLFLVNSSGAIALLVYLVIA) form a helical membrane-spanning segment. Over 377-401 (VSQLKMRKKLEKTNPEALKIKMWLF) the chain is Cytoplasmic. Residues 402 to 422 (PFLTYLTIIAICGILVSMAFI) form a helical membrane-spanning segment. The Extracellular segment spans residues 423–425 (DSM). The chain crosses the membrane as a helical span at residues 426-446 (RDELLLTGVITGIVLISYLVF). Residues 447 to 469 (RKRKVSEKAAANPVTQQQPDILP) are Cytoplasmic-facing.

It belongs to the amino acid-polyamine-organocation (APC) superfamily. Amino acid transporter (AAT) (TC 2.A.3.1) family.

Its subcellular location is the cell membrane. It catalyses the reaction 4-aminobutanoate(in) + H(+)(in) = 4-aminobutanoate(out) + H(+)(out). It carries out the reaction beta-alanine(in) + H(+)(in) = beta-alanine(out) + H(+)(out). Its pathway is amino-acid degradation; 4-aminobutanoate degradation. In terms of biological role, transporter for gamma-aminobutyrate (GABA). Can also transport beta-alanine. Can translocate several open-chain GABA analogs (3-aminobutyrate, 3-aminopropanoate, cis-4-aminobutenoate) across the membrane via counterflow against GABA, but cannot transport muscimol. Also functions as a low-affinity proline importer. In Bacillus subtilis (strain 168), this protein is Gamma-aminobutyric acid permease.